The chain runs to 131 residues: DNA-directed RNA polymerase subunit omega (131 aa).

The protein belongs to the RNA polymerase subunit omega family. The RNAP catalytic core consists of 2 alpha, 1 beta, 1 beta' and 1 omega subunit. When a sigma factor is associated with the core the holoenzyme is formed, which can initiate transcription.

The enzyme catalyses RNA(n) + a ribonucleoside 5'-triphosphate = RNA(n+1) + diphosphate. Functionally, promotes RNA polymerase assembly. Latches the N- and C-terminal regions of the beta' subunit thereby facilitating its interaction with the beta and alpha subunits. The chain is DNA-directed RNA polymerase subunit omega from Chelativorans sp. (strain BNC1).